The sequence spans 616 residues: 2-isopropylmalate synthase (616 aa).

The segment at methionine 1–serine 34 is disordered. Residues proline 67 to arginine 341 enclose the Pyruvate carboxyltransferase domain. Residues aspartate 76, histidine 280, histidine 282, and asparagine 316 each contribute to the Mg(2+) site. The segment at arginine 490–valine 616 is regulatory domain.

The protein belongs to the alpha-IPM synthase/homocitrate synthase family. LeuA type 2 subfamily. In terms of assembly, homodimer. Mg(2+) is required as a cofactor.

It localises to the cytoplasm. It carries out the reaction 3-methyl-2-oxobutanoate + acetyl-CoA + H2O = (2S)-2-isopropylmalate + CoA + H(+). It functions in the pathway amino-acid biosynthesis; L-leucine biosynthesis; L-leucine from 3-methyl-2-oxobutanoate: step 1/4. With respect to regulation, inhibited by L-leucine, the pathway end product. Catalyzes the condensation of the acetyl group of acetyl-CoA with 3-methyl-2-oxobutanoate (2-ketoisovalerate) to form 3-carboxy-3-hydroxy-4-methylpentanoate (2-isopropylmalate). Complements an E.coli leuA deletion. This chain is 2-isopropylmalate synthase, found in Corynebacterium glutamicum (strain ATCC 13032 / DSM 20300 / JCM 1318 / BCRC 11384 / CCUG 27702 / LMG 3730 / NBRC 12168 / NCIMB 10025 / NRRL B-2784 / 534).